The chain runs to 289 residues: Dihydropteroate synthase (289 aa).

The Pterin-binding domain maps to 28–282 (TYVMGILNTT…DVEAMAQICK (255 aa)). A Mg(2+)-binding site is contributed by Asn35. (7,8-dihydropterin-6-yl)methyl diphosphate is bound by residues Thr75, Asp109, Asn128, Asp199, Lys235, and 270-272 (RVH).

This sequence belongs to the DHPS family. Requires Mg(2+) as cofactor.

The catalysed reaction is (7,8-dihydropterin-6-yl)methyl diphosphate + 4-aminobenzoate = 7,8-dihydropteroate + diphosphate. It functions in the pathway cofactor biosynthesis; tetrahydrofolate biosynthesis; 7,8-dihydrofolate from 2-amino-4-hydroxy-6-hydroxymethyl-7,8-dihydropteridine diphosphate and 4-aminobenzoate: step 1/2. Functionally, catalyzes the condensation of para-aminobenzoate (pABA) with 6-hydroxymethyl-7,8-dihydropterin diphosphate (DHPt-PP) to form 7,8-dihydropteroate (H2Pte), the immediate precursor of folate derivatives. The chain is Dihydropteroate synthase (folP) from Synechocystis sp. (strain ATCC 27184 / PCC 6803 / Kazusa).